Consider the following 146-residue polypeptide: UPF0260 protein VP2169 (146 aa).

It belongs to the UPF0260 family.

The polypeptide is UPF0260 protein VP2169 (Vibrio parahaemolyticus serotype O3:K6 (strain RIMD 2210633)).